The following is a 436-amino-acid chain: GTPase Der (436 aa).

EngA-type G domains follow at residues 4-167 (PTVA…PVEE) and 175-351 (IRFS…ESQN). GTP is bound by residues 10–17 (GRPNVGKS), 57–61 (DTGGI), 119–122 (NKVD), 181–188 (GRPNVGKS), 229–233 (DTAGM), and 294–297 (NKWD). The region spanning 352–436 (KRIPSAVLND…PINLIARKRK (85 aa)) is the KH-like domain.

Belongs to the TRAFAC class TrmE-Era-EngA-EngB-Septin-like GTPase superfamily. EngA (Der) GTPase family. In terms of assembly, associates with the 50S ribosomal subunit.

Its function is as follows. GTPase that plays an essential role in the late steps of ribosome biogenesis. The chain is GTPase Der from Streptococcus agalactiae serotype Ia (strain ATCC 27591 / A909 / CDC SS700).